Consider the following 430-residue polypeptide: Serine--tRNA ligase (430 aa).

Residue 237-239 (TAE) coordinates L-serine. Residue 268–270 (RSE) coordinates ATP. Glutamate 291 lines the L-serine pocket. Residue 355–358 (EISS) participates in ATP binding. Serine 391 contributes to the L-serine binding site.

The protein belongs to the class-II aminoacyl-tRNA synthetase family. Type-1 seryl-tRNA synthetase subfamily. In terms of assembly, homodimer. The tRNA molecule binds across the dimer.

The protein resides in the cytoplasm. It carries out the reaction tRNA(Ser) + L-serine + ATP = L-seryl-tRNA(Ser) + AMP + diphosphate + H(+). The enzyme catalyses tRNA(Sec) + L-serine + ATP = L-seryl-tRNA(Sec) + AMP + diphosphate + H(+). Its pathway is aminoacyl-tRNA biosynthesis; selenocysteinyl-tRNA(Sec) biosynthesis; L-seryl-tRNA(Sec) from L-serine and tRNA(Sec): step 1/1. In terms of biological role, catalyzes the attachment of serine to tRNA(Ser). Is also able to aminoacylate tRNA(Sec) with serine, to form the misacylated tRNA L-seryl-tRNA(Sec), which will be further converted into selenocysteinyl-tRNA(Sec). This chain is Serine--tRNA ligase, found in Cronobacter sakazakii (strain ATCC BAA-894) (Enterobacter sakazakii).